The primary structure comprises 86 residues: MTEVKTFMVKGAALFNESEFPVRQSFTKYVRALNEEQAKEKVYMDLGSKNKIKRRNITFLEIKEVDPSTVKEKRIKELSKIDKIIL.

The protein belongs to the eukaryotic ribosomal protein eL20 family. As to quaternary structure, part of the 50S ribosomal subunit. Binds 23S rRNA.

The protein is Large ribosomal subunit protein eL20 of Metallosphaera sedula (strain ATCC 51363 / DSM 5348 / JCM 9185 / NBRC 15509 / TH2).